The primary structure comprises 560 residues: DNA ligase B (560 aa).

Lys124 acts as the N6-AMP-lysine intermediate in catalysis.

Belongs to the NAD-dependent DNA ligase family. LigB subfamily.

The enzyme catalyses NAD(+) + (deoxyribonucleotide)n-3'-hydroxyl + 5'-phospho-(deoxyribonucleotide)m = (deoxyribonucleotide)n+m + AMP + beta-nicotinamide D-nucleotide.. Catalyzes the formation of phosphodiester linkages between 5'-phosphoryl and 3'-hydroxyl groups in double-stranded DNA using NAD as a coenzyme and as the energy source for the reaction. This chain is DNA ligase B, found in Escherichia coli O81 (strain ED1a).